The chain runs to 129 residues: Protein HMF1 (129 aa).

Residue Lys52 forms a Glycyl lysine isopeptide (Lys-Gly) (interchain with G-Cter in ubiquitin) linkage.

This sequence belongs to the RutC family.

The protein localises to the cytoplasm. The protein resides in the nucleus. Its subcellular location is the mitochondrion intermembrane space. This chain is Protein HMF1 (HMF1), found in Saccharomyces cerevisiae (strain ATCC 204508 / S288c) (Baker's yeast).